Here is a 145-residue protein sequence, read N- to C-terminus: MAIERTLSIIKPDGLEKGVIGKIISRFEEKGLKPVAIRLQHLSQAQAEGFYAVHKARPFFKDLVQFMISGPVVLMVLEGENAVLANRDIMGATNPAQAAEGTIRKDFATSIDKNTVHGSDSLENAKIEIAYFFRETEIHSYPYQK.

Lys11, Phe59, Arg87, Thr93, Arg104, and Asn114 together coordinate ATP. His117 functions as the Pros-phosphohistidine intermediate in the catalytic mechanism.

The protein belongs to the NDK family. As to quaternary structure, homotetramer. Requires Mg(2+) as cofactor.

The protein localises to the cytoplasm. It carries out the reaction a 2'-deoxyribonucleoside 5'-diphosphate + ATP = a 2'-deoxyribonucleoside 5'-triphosphate + ADP. It catalyses the reaction a ribonucleoside 5'-diphosphate + ATP = a ribonucleoside 5'-triphosphate + ADP. Major role in the synthesis of nucleoside triphosphates other than ATP. The ATP gamma phosphate is transferred to the NDP beta phosphate via a ping-pong mechanism, using a phosphorylated active-site intermediate. The chain is Nucleoside diphosphate kinase from Myxococcus xanthus.